The chain runs to 380 residues: N-acetylaspartylglutamate synthase A (380 aa).

Residues 115 to 300 form the ATP-grasp domain; it reads FQELAGHGVP…VGAIIADYAM (186 aa). ATP contacts are provided by residues Lys-154, 189-199, and Arg-215; that span reads QKYVKESHGKD. Positions 260, 273, and 275 each coordinate Mg(2+). Residues Asp-260, Glu-273, and Asn-275 each contribute to the Mn(2+) site. The residue at position 319 (Ser-319) is a Phosphoserine. The disordered stretch occupies residues 345–370; the sequence is GSTSSESEPELGEARDSSVKTMGAPP.

This sequence belongs to the RimK family. Mg(2+) is required as a cofactor. Mn(2+) serves as cofactor. As to expression, highly expressed in spinal cord and brain.

It localises to the cytoplasm. It catalyses the reaction N-acetyl-L-aspartate + L-glutamate + ATP = N-acetyl-L-aspartyl-L-glutamate + ADP + phosphate + H(+). The catalysed reaction is N-acetyl-L-aspartate + 2 L-glutamate + 2 ATP = N-acetyl-L-aspartyl-L-glutamyl-L-glutamate + 2 ADP + 2 phosphate + 2 H(+). Functionally, catalyzes the synthesis of N-acetyl-L-aspartyl-L-glutamate (NAAG) and N-acetyl-L-aspartyl-L-glutamyl-L-glutamate. The sequence is that of N-acetylaspartylglutamate synthase A (Rimkla) from Mus musculus (Mouse).